Reading from the N-terminus, the 333-residue chain is Geranylgeranyl pyrophosphate synthase olcC (333 aa).

3 residues coordinate isopentenyl diphosphate: Lys61, Arg64, and His93. Residues Asp100 and Asp104 each coordinate Mg(2+). A dimethylallyl diphosphate-binding site is contributed by Arg109. Residue Arg110 coordinates isopentenyl diphosphate. The dimethylallyl diphosphate site is built by Lys187, Thr188, and Gln221. A Mg(2+)-binding site is contributed by Asp224. Dimethylallyl diphosphate is bound by residues Asn228, Lys238, and Lys248.

The protein belongs to the FPP/GGPP synthase family. The cofactor is Mg(2+).

It catalyses the reaction isopentenyl diphosphate + dimethylallyl diphosphate = (2E)-geranyl diphosphate + diphosphate. The catalysed reaction is isopentenyl diphosphate + (2E)-geranyl diphosphate = (2E,6E)-farnesyl diphosphate + diphosphate. The enzyme catalyses isopentenyl diphosphate + (2E,6E)-farnesyl diphosphate = (2E,6E,10E)-geranylgeranyl diphosphate + diphosphate. It participates in secondary metabolite biosynthesis; terpenoid biosynthesis. Its function is as follows. Geranylgeranyl pyrophosphate synthase; part of the gene cluster that mediates the biosynthesis of 15-deoxyoxalicine B. The first step of the pathway is the synthesis of nicotinyl-CoA from nicotinic acid by the nicotinic acid-CoA ligase olcI. Nicotinyl-CoA is then a substrate of polyketide synthase olcA to produce 4-hydroxy-6-(3-pyridinyl)-2H-pyran-2-one (HPPO) which is further prenylated by the polyprenyl transferase olcH to yield geranylgeranyl-HPPO. Geranylgeranyl pyrophosphate is provided by the cluster-specific geranylgeranyl pyrophosphate synthase olcC. The FAD-dependent monooxygenase olcE catalyzes the epoxidation of geranylgeranyl-HPPO and the terpene cyclase olcD catalyzes the cyclization of the terpenoid component, resulting in the formation of the tricyclic terpene moiety seen in predecaturin E. The cytochrome P450 monooxygenase then catalyzes the allylic oxidation of predecaturin E, which is followed by spirocylization with concomitant loss of one molecule of water to form decaturin E. Decaturin E is the substrate of the cytochrome P450 monooxygenase olcJ which hydroxylates it at the C-29 position to form decaturin F. The short-chain dehydrogenase/reductase olcF may catalyze the oxidation of decaturin F to generate the 29-hydroxyl-27-one intermediate, and subsequent hemiacetal formation probably leads to the formation of decaturin C. The dioxygenase olcK may be a peroxisomal enzyme that catalyzes the hydroxylation of decaturin C into decaturin A once decaturin C is shuttled into the peroxisome by the MFS transporter olcL. Finally the cytochrome P450 monooxygenase olcB catalyzes the oxidative rearrangement to yield 15-deoxyoxalicine B. In the absence of olcJ, decaturin E may be shunted to a pathway in which it is oxidized to a ketone, possibly by olcF, to form decaturin D, which undergoes further allylic oxidation to yield decaturin G. Moreover, in the absence of oclK or oclL, oclB can convert decaturin C into 15-deoxyoxalicine A. This Penicillium canescens protein is Geranylgeranyl pyrophosphate synthase olcC.